Here is a 449-residue protein sequence, read N- to C-terminus: BPI fold-containing family B member 6 (449 aa).

The signal sequence occupies residues 1 to 18 (MLCSLSLVLCGLLAGTRA). Asparagine 115 carries N-linked (GlcNAc...) asparagine glycosylation. Cysteine 138 and cysteine 172 form a disulfide bridge.

This sequence belongs to the BPI/LBP/Plunc superfamily. BPI/LBP family.

The protein localises to the secreted. The protein is BPI fold-containing family B member 6 (Bpifb6) of Mus musculus (Mouse).